A 91-amino-acid chain; its full sequence is Proline, histidine and glycine-rich protein 1 (91 aa).

The tract at residues 1–91 (MHPGGKGHCG…HCGPHPGPHH (91 aa)) is disordered. Gly residues-rich tracts occupy residues 33–42 (HPGHGPGHCP), 49–63 (GHGGPSHGHGPGHCP), and 70–82 (GHGGPSHGHGPGH).

The protein is Proline, histidine and glycine-rich protein 1 (Phgr1) of Mus musculus (Mouse).